We begin with the raw amino-acid sequence, 179 residues long: UPF0227 protein Shewmr4_1727 (179 aa).

It belongs to the UPF0227 family.

This is UPF0227 protein Shewmr4_1727 from Shewanella sp. (strain MR-4).